Consider the following 221-residue polypeptide: Transcription factor otaR1 (221 aa).

The disordered stretch occupies residues 109 to 146; it reads ASRSRPAFSTPASRPGLSSAKSPSLGATSPGSMDRSEE. The span at 127–139 shows a compositional bias: polar residues; it reads SAKSPSLGATSPG. The segment at 152–192 is basic motif; the sequence is KKYHEKYKERNRLAAGRSRQKQADLINLLQAEQQEEERRRK. The region spanning 152–215 is the bZIP domain; it reads KKYHEKYKER…VDMKQELQHH (64 aa). The leucine-zipper stretch occupies residues 198-212; that stretch reads IANMQKELVDMKQEL.

The protein localises to the nucleus. Transcription factor; part of the gene cluster that mediates the biosynthesis of ochratoxin A (OTA), a mycotoxin demonstrated to have nephrotoxic, immunotoxic, genotoxic, neurotoxic, and teratogenic properties. Positively regulates the expression of the OTA biosynthetic genes and subsequent production of OTA. Probably binds to conserved 5'-ACGT-3' bZIP binding motifs found in multiple copies (3 to 4) in the promoters of the OTA biosynthetic genes. Acts not only as a pathway-specific regulator of the OTA cluster but also binds at other chromosomal positions outside the OTA cluster and can act as a broad regulator. Negatively regulates pathogenicity and plays a critical role in tolerance to reactive oxygen species (ROS). The polypeptide is Transcription factor otaR1 (Aspergillus niger (strain ATCC MYA-4892 / CBS 513.88 / FGSC A1513)).